Here is a 388-residue protein sequence, read N- to C-terminus: Processive diacylglycerol beta-glucosyltransferase (388 aa).

Belongs to the glycosyltransferase 28 family. UgtP subfamily.

The protein localises to the cell membrane. It carries out the reaction a 1,2-diacyl-3-O-(beta-D-glucopyranosyl)-sn-glycerol + UDP-alpha-D-glucose = a 1,2-diacyl-3-O-(beta-D-Glc-(1-&gt;6)-beta-D-Glc)-sn-glycerol + UDP + H(+). The catalysed reaction is a 1,2-diacyl-3-O-(beta-D-Glc-(1-&gt;6)-beta-D-Glc)-sn-glycerol + UDP-alpha-D-glucose = a 1,2-diacyl-3-O-(beta-D-Glc-(1-&gt;6)-beta-D-Glc-(1-&gt;6)-beta-D-Glc)-sn-glycerol + UDP + H(+). It catalyses the reaction a 1,2-diacyl-sn-glycerol + UDP-alpha-D-glucose = a 1,2-diacyl-3-O-(beta-D-glucopyranosyl)-sn-glycerol + UDP + H(+). It participates in glycolipid metabolism; diglucosyl-diacylglycerol biosynthesis. Processive glucosyltransferase involved in the biosynthesis of both the bilayer- and non-bilayer-forming membrane glucolipids. Is able to successively transfer up to three glucosyl residues to diacylglycerol (DAG), thereby catalyzing the formation of beta-monoglucosyl-DAG (3-O-(beta-D-glucopyranosyl)-1,2-diacyl-sn-glycerol), beta-diglucosyl-DAG (3-O-(beta-D-glucopyranosyl-beta-(1-&gt;6)-D-glucopyranosyl)-1,2-diacyl-sn-glycerol) and beta-triglucosyl-DAG (3-O-(beta-D-glucopyranosyl-beta-(1-&gt;6)-D-glucopyranosyl-beta-(1-&gt;6)-D-glucopyranosyl)-1,2-diacyl-sn-glycerol). Beta-diglucosyl-DAG is the predominant glycolipid found in Bacillales and is also used as a membrane anchor for lipoteichoic acid (LTA). The polypeptide is Processive diacylglycerol beta-glucosyltransferase (Bacillus mycoides (strain KBAB4) (Bacillus weihenstephanensis)).